The sequence spans 197 residues: Holliday junction branch migration complex subunit RuvA (197 aa).

A domain I region spans residues 1–63; it reads MFDYIKGQLT…EDAHLLFGFH (63 aa). Residues 64–142 form a domain II region; the sequence is TENEKDVFLK…TIPEGGQAQQ (79 aa). The tract at residues 142-146 is flexible linker; sequence QMPKA. The interval 147-197 is domain III; sequence KGNQQLDEAIEALLALGYKATELKKIRAFFEGTDDTAEQYIKSALKMLMKG.

The protein belongs to the RuvA family. As to quaternary structure, homotetramer. Forms an RuvA(8)-RuvB(12)-Holliday junction (HJ) complex. HJ DNA is sandwiched between 2 RuvA tetramers; dsDNA enters through RuvA and exits via RuvB. An RuvB hexamer assembles on each DNA strand where it exits the tetramer. Each RuvB hexamer is contacted by two RuvA subunits (via domain III) on 2 adjacent RuvB subunits; this complex drives branch migration. In the full resolvosome a probable DNA-RuvA(4)-RuvB(12)-RuvC(2) complex forms which resolves the HJ.

It localises to the cytoplasm. In terms of biological role, the RuvA-RuvB-RuvC complex processes Holliday junction (HJ) DNA during genetic recombination and DNA repair, while the RuvA-RuvB complex plays an important role in the rescue of blocked DNA replication forks via replication fork reversal (RFR). RuvA specifically binds to HJ cruciform DNA, conferring on it an open structure. The RuvB hexamer acts as an ATP-dependent pump, pulling dsDNA into and through the RuvAB complex. HJ branch migration allows RuvC to scan DNA until it finds its consensus sequence, where it cleaves and resolves the cruciform DNA. This Streptococcus uberis (strain ATCC BAA-854 / 0140J) protein is Holliday junction branch migration complex subunit RuvA.